The following is a 406-amino-acid chain: Ubiquitin-associated domain-containing protein 1 (406 aa).

The Ubiquitin-like domain maps to leucine 14–proline 98. The segment at arginine 95 to aspartate 122 is disordered. Basic and acidic residues predominate over residues alanine 108–aspartate 122. The 46-residue stretch at glutamate 186 to histidine 231 folds into the UBA 1 domain. Over residues aspartate 238–glutamate 257 the composition is skewed to low complexity. Positions aspartate 238–lysine 272 are disordered. Residues arginine 289 to aspartate 329 form the UBA 2 domain. Positions asparagine 354–methionine 393 constitute an STI1 domain.

In terms of assembly, component of the KPC complex.

Its subcellular location is the cytoplasm. It functions in the pathway protein modification; protein ubiquitination. Its function is as follows. Non-catalytic component of the KPC complex, a E3 ubiquitin-protein ligase complex that mediates polyubiquitination of target proteins, such as CDKN1B and NFKB1. Within the KPC complex, UBAC1 acts as an adapter that promotes the transfer of target proteins that have been polyubiquitinated by RNF123/KPC1 to the 26S proteasome. The polypeptide is Ubiquitin-associated domain-containing protein 1 (ubac1) (Xenopus tropicalis (Western clawed frog)).